Here is a 123-residue protein sequence, read N- to C-terminus: Large ribosomal subunit protein bL12 (123 aa).

This sequence belongs to the bacterial ribosomal protein bL12 family. Homodimer. Part of the ribosomal stalk of the 50S ribosomal subunit. Forms a multimeric L10(L12)X complex, where L10 forms an elongated spine to which 2 to 4 L12 dimers bind in a sequential fashion. Binds GTP-bound translation factors.

In terms of biological role, forms part of the ribosomal stalk which helps the ribosome interact with GTP-bound translation factors. Is thus essential for accurate translation. In Metamycoplasma arthritidis (strain 158L3-1) (Mycoplasma arthritidis), this protein is Large ribosomal subunit protein bL12.